The primary structure comprises 242 residues: Mannosyl-3-phosphoglycerate phosphatase (242 aa).

The Nucleophile role is filled by Asp-8. Mg(2+) contacts are provided by Asp-8, Asp-10, Ser-169, and Asp-204.

It belongs to the HAD-like hydrolase superfamily. MPGP family. It depends on Mg(2+) as a cofactor.

Its subcellular location is the cytoplasm. It carries out the reaction 2-O-(alpha-D-mannosyl)-3-phosphoglycerate + H2O = (2R)-2-O-(alpha-D-mannosyl)-glycerate + phosphate. It participates in carbohydrate biosynthesis; 2-(alpha-D-mannosyl)-D-glycerate biosynthesis; 2-(alpha-D-mannosyl)-D-glycerate from GDP-alpha-D-mannose (MPG route): step 2/2. Hydrolyzes mannosyl-3-phosphoglycerate (MPG) to form the osmolyte mannosylglycerate (MG). This chain is Mannosyl-3-phosphoglycerate phosphatase, found in Pyrococcus furiosus (strain ATCC 43587 / DSM 3638 / JCM 8422 / Vc1).